A 144-amino-acid chain; its full sequence is Androgenic gland hormone (144 aa).

An N-terminal signal peptide occupies residues 1–21; sequence MKGLVILVSLMCLALYNRICA. Disulfide bonds link cysteine 33–cysteine 123, cysteine 42–cysteine 59, cysteine 44–cysteine 141, and cysteine 124–cysteine 132. Positions 68-113 are cleaved as a propeptide — c peptide; it reads SAPEDELAFEDYEDQDYFHPRALSIPSEIEHDNEKESDAFSILSRG. Asparagine 133 is a glycosylation site (N-linked (GlcNAc...) (complex) asparagine).

As to expression, androgenic gland.

It is found in the secreted. Controls sex differentiation and the formation of male appendages, spermatogenesis, pigmentation, and male specific behavior. This Armadillidium vulgare (Pillbug) protein is Androgenic gland hormone.